Reading from the N-terminus, the 119-residue chain is Large ribosomal subunit protein bL20 (119 aa).

Belongs to the bacterial ribosomal protein bL20 family.

Binds directly to 23S ribosomal RNA and is necessary for the in vitro assembly process of the 50S ribosomal subunit. It is not involved in the protein synthesizing functions of that subunit. The sequence is that of Large ribosomal subunit protein bL20 from Jannaschia sp. (strain CCS1).